Here is a 239-residue protein sequence, read N- to C-terminus: Small ribosomal subunit protein uS2 (239 aa).

The protein belongs to the universal ribosomal protein uS2 family.

The chain is Small ribosomal subunit protein uS2 from Synechococcus sp. (strain CC9902).